Consider the following 117-residue polypeptide: MSLETVPKDLRHLRACLLCSLVKTIDQFEYDGCDNCESYLQMKGNREMVYECTSSSFDGVIAMMSPEDSWVAKWQRIGNFKPGVYAVTVTGRLPPGVVRELKSRGVIYRSRDTAVKT.

An interaction with SUPT5H region spans residues methionine 1–leucine 40. Residues cysteine 16–cysteine 36 form a C4-type zinc finger.

The protein belongs to the SPT4 family. In terms of assembly, interacts with SUPT5H to form the DSIF complex. DSIF interacts with RNA polymerase II and with the positive transcription elongation factor b complex (P-TEFb complex), which is composed of CDK9 and cyclin-T.

The protein localises to the nucleus. Functionally, may function as a component of the DRB sensitivity-inducing factor complex (DSIF complex), which regulates transcription elongation by RNA polymerase II. Probably enhances transcriptional pausing at sites proximal to the promoter, which may facilitate the assembly of an elongation competent RNA polymerase II complex. Also acts to stimulate transcriptional elongation at low nucleotide concentrations. Regulation of transcriptional elongation by this protein is required for the expression of genes which control neuronal development. The sequence is that of Transcription elongation factor SPT4 (supt4h1) from Danio rerio (Zebrafish).